The primary structure comprises 294 residues: Acetylglutamate kinase (294 aa).

Substrate contacts are provided by residues 63–64 (GG), R85, and N188.

It belongs to the acetylglutamate kinase family. ArgB subfamily.

It localises to the cytoplasm. It carries out the reaction N-acetyl-L-glutamate + ATP = N-acetyl-L-glutamyl 5-phosphate + ADP. It participates in amino-acid biosynthesis; L-arginine biosynthesis; N(2)-acetyl-L-ornithine from L-glutamate: step 2/4. In terms of biological role, catalyzes the ATP-dependent phosphorylation of N-acetyl-L-glutamate. The protein is Acetylglutamate kinase of Methanococcus aeolicus (strain ATCC BAA-1280 / DSM 17508 / OCM 812 / Nankai-3).